The sequence spans 82 residues: MNHKFIALLLVVLCCALAVHQVSAEVPSHCTLSLATGTCKGYFPRFGYNIEMGKCVEFIYGGCDGNANNFRNLEECQQSCSV.

The first 24 residues, Met-1–Ala-24, serve as a signal peptide directing secretion. The region spanning Cys-30–Cys-80 is the BPTI/Kunitz inhibitor domain. Cystine bridges form between Cys-30–Cys-80, Cys-39–Cys-63, and Cys-55–Cys-76.

Belongs to the venom Kunitz-type family. In terms of tissue distribution, expressed by the venom gland.

It localises to the secreted. Serine protease inhibitor that inhibits plasmin (IC(50)=43.53 nM, Ki=3.6 nM), thereby acting as an antifibrinolytic agent. May act in a cooperative manner with the serine protease Bi-VSP (AC B5U2W0) to promote the spread of bee venom under anti-bleeding conditions. In Bombus ignitus (Bumblebee), this protein is Kunitz-type serine protease inhibitor Bi-KTI.